We begin with the raw amino-acid sequence, 212 residues long: Ribonuclease HII (212 aa).

Positions 20-209 constitute an RNase H type-2 domain; that stretch reads TCVVGVDEVG…VHNILYQEAS (190 aa). A divalent metal cation contacts are provided by Asp-26, Glu-27, and Asp-117.

This sequence belongs to the RNase HII family. The cofactor is Mn(2+). It depends on Mg(2+) as a cofactor.

The protein localises to the cytoplasm. It catalyses the reaction Endonucleolytic cleavage to 5'-phosphomonoester.. In terms of biological role, endonuclease that specifically degrades the RNA of RNA-DNA hybrids. The polypeptide is Ribonuclease HII (Cereibacter sphaeroides (strain ATCC 17023 / DSM 158 / JCM 6121 / CCUG 31486 / LMG 2827 / NBRC 12203 / NCIMB 8253 / ATH 2.4.1.) (Rhodobacter sphaeroides)).